Here is a 691-residue protein sequence, read N- to C-terminus: DNA ligase (691 aa).

NAD(+) contacts are provided by residues Asp-41–Asp-45, Ser-90–Leu-91, and Glu-130. Catalysis depends on Lys-132, which acts as the N6-AMP-lysine intermediate. Arg-153, Glu-190, Lys-307, and Lys-331 together coordinate NAD(+). Residues Cys-425, Cys-428, Cys-443, and Cys-449 each contribute to the Zn(2+) site. The 82-residue stretch at Ala-610–Pro-691 folds into the BRCT domain.

The protein belongs to the NAD-dependent DNA ligase family. LigA subfamily. It depends on Mg(2+) as a cofactor. Mn(2+) serves as cofactor.

The enzyme catalyses NAD(+) + (deoxyribonucleotide)n-3'-hydroxyl + 5'-phospho-(deoxyribonucleotide)m = (deoxyribonucleotide)n+m + AMP + beta-nicotinamide D-nucleotide.. Functionally, DNA ligase that catalyzes the formation of phosphodiester linkages between 5'-phosphoryl and 3'-hydroxyl groups in double-stranded DNA using NAD as a coenzyme and as the energy source for the reaction. It is essential for DNA replication and repair of damaged DNA. The protein is DNA ligase of Burkholderia cenocepacia (strain ATCC BAA-245 / DSM 16553 / LMG 16656 / NCTC 13227 / J2315 / CF5610) (Burkholderia cepacia (strain J2315)).